A 310-amino-acid polypeptide reads, in one-letter code: MPLRLIFMGTPEFAVPTLLQLIAHGHEIAAVYTREARPAGRGMKLQPSPVAREAHRLGIPVLTPKTLKTPAALDEFRSHGADAAVVVAYGMILPQAILDAPPLGCFNLHGSLLPRWRGAAPINRAIMAGDAETGVMVMKMDAGLDTGDVAMAERIAVTDAMTASDLHDALALLGADLMARAMAALARGGLQLTKQSEHGVTYAAKIDKAEARIDWSRPARDVLRHIHGLSPFPGAWCEMLVDGEQVRVKILRCGVVKGPGEPGELLDDRLTIACKDGAIRVLELQRAGKPPMKADAFLNGTPLKPPMRFA.

111-114 (SLLP) contacts (6S)-5,6,7,8-tetrahydrofolate.

The protein belongs to the Fmt family.

The enzyme catalyses L-methionyl-tRNA(fMet) + (6R)-10-formyltetrahydrofolate = N-formyl-L-methionyl-tRNA(fMet) + (6S)-5,6,7,8-tetrahydrofolate + H(+). Functionally, attaches a formyl group to the free amino group of methionyl-tRNA(fMet). The formyl group appears to play a dual role in the initiator identity of N-formylmethionyl-tRNA by promoting its recognition by IF2 and preventing the misappropriation of this tRNA by the elongation apparatus. In Nitrobacter hamburgensis (strain DSM 10229 / NCIMB 13809 / X14), this protein is Methionyl-tRNA formyltransferase.